The following is a 63-amino-acid chain: Large ribosomal subunit protein uL29 (63 aa).

Belongs to the universal ribosomal protein uL29 family.

This chain is Large ribosomal subunit protein uL29, found in Christiangramia forsetii (strain DSM 17595 / CGMCC 1.15422 / KT0803) (Gramella forsetii).